The following is a 239-amino-acid chain: Large ribosomal subunit protein uL30 (239 aa).

A disordered region spans residues Met-1–Met-22.

It belongs to the universal ribosomal protein uL30 family.

The chain is Large ribosomal subunit protein uL30 (RPL7) from Encephalitozoon cuniculi (strain GB-M1) (Microsporidian parasite).